Consider the following 499-residue polypeptide: Probable dipeptidase B (499 aa).

Cysteine 26 is a catalytic residue.

It belongs to the peptidase C69 family.

The enzyme catalyses an L-aminoacyl-L-amino acid + H2O = 2 an L-alpha-amino acid. The sequence is that of Probable dipeptidase B (pepDB) from Streptococcus pyogenes serotype M6 (strain ATCC BAA-946 / MGAS10394).